Reading from the N-terminus, the 244-residue chain is uncharacterized protein (244 aa).

Residues 19-196 (ATDNRKLVIL…ACVIRYLKHL (178 aa)) form the FCP1 homology domain.

This is an uncharacterized protein from Schizosaccharomyces pombe (strain 972 / ATCC 24843) (Fission yeast).